The sequence spans 87 residues: Phosphoribosyl-ATP pyrophosphatase (87 aa).

This sequence belongs to the PRA-PH family.

Its subcellular location is the cytoplasm. The catalysed reaction is 1-(5-phospho-beta-D-ribosyl)-ATP + H2O = 1-(5-phospho-beta-D-ribosyl)-5'-AMP + diphosphate + H(+). It functions in the pathway amino-acid biosynthesis; L-histidine biosynthesis; L-histidine from 5-phospho-alpha-D-ribose 1-diphosphate: step 2/9. The polypeptide is Phosphoribosyl-ATP pyrophosphatase (Paenarthrobacter aurescens (strain TC1)).